Reading from the N-terminus, the 351-residue chain is Glycerol-3-phosphate dehydrogenase 1-like protein (351 aa).

An NAD(+)-binding site is contributed by 12–17 (GSGNWG). K122 is a binding site for substrate. A155 is a binding site for NAD(+). K206 serves as the catalytic Proton acceptor. 3 residues coordinate NAD(+): R271, K298, and Q300. 271–272 (RN) provides a ligand contact to substrate.

The protein belongs to the NAD-dependent glycerol-3-phosphate dehydrogenase family. In terms of assembly, interacts with SCN5A.

It is found in the cytoplasm. It catalyses the reaction sn-glycerol 3-phosphate + NAD(+) = dihydroxyacetone phosphate + NADH + H(+). Functionally, plays a role in regulating cardiac sodium current; decreased enzymatic activity with resulting increased levels of glycerol 3-phosphate activating the DPD1L-dependent SCN5A phosphorylation pathway, may ultimately lead to decreased sodium current; cardiac sodium current may also be reduced due to alterations of NAD(H) balance induced by DPD1L. This Mus musculus (Mouse) protein is Glycerol-3-phosphate dehydrogenase 1-like protein (Gpd1l).